A 602-amino-acid chain; its full sequence is Myotubularin (602 aa).

The tract at residues 1 to 32 (MASNSTPKYNSNSLENSLRRSPGDGMNHEQND) is disordered. Over residues 17–31 (SLRRSPGDGMNHEQN) the composition is skewed to basic and acidic residues. The GRAM domain maps to 28–96 (HEQNDEIPCL…GVIARIEKMG (69 aa)). The region spanning 162–537 (GWAVYDAMTE…RHLELWVNYY (376 aa)) is the Myotubularin phosphatase domain. Residues N287, N312, and I313 each coordinate a 1,2-diacyl-sn-glycero-3-phospho-(1D-myo-inositol-3,5-bisphosphate). N287, N312, and I313 together coordinate a 1,2-diacyl-sn-glycero-3-phospho-(1D-myo-inositol-3-phosphate). The Phosphocysteine intermediate role is filled by C374. Residues S375, D376, G377, W378, D379, R380, K416, and R420 each coordinate a 1,2-diacyl-sn-glycero-3-phospho-(1D-myo-inositol-3,5-bisphosphate). Positions 375, 376, 377, 378, 379, and 380 each coordinate a 1,2-diacyl-sn-glycero-3-phospho-(1D-myo-inositol-3-phosphate). R420 contacts a 1,2-diacyl-sn-glycero-3-phospho-(1D-myo-inositol-3-phosphate). The tract at residues 574–602 (QITNSPKMNSSTTSPSSPSQIMPQVHTPF) is disordered. Positions 583–592 (SSTTSPSSPS) are enriched in low complexity.

It belongs to the protein-tyrosine phosphatase family. Non-receptor class myotubularin subfamily.

It is found in the cytoplasm. It localises to the cell membrane. The protein localises to the cell projection. The protein resides in the filopodium. Its subcellular location is the ruffle. It is found in the late endosome. It localises to the myofibril. The protein localises to the sarcomere. It carries out the reaction a 1,2-diacyl-sn-glycero-3-phospho-(1D-myo-inositol-3-phosphate) + H2O = a 1,2-diacyl-sn-glycero-3-phospho-(1D-myo-inositol) + phosphate. The catalysed reaction is a 1,2-diacyl-sn-glycero-3-phospho-(1D-myo-inositol-3,5-bisphosphate) + H2O = a 1,2-diacyl-sn-glycero-3-phospho-(1D-myo-inositol-5-phosphate) + phosphate. It catalyses the reaction 1,2-dioctanoyl-sn-glycero-3-phospho-(1-D-myo-inositol-3-phosphate) + H2O = 1,2-dioctanoyl-sn-glycero-3-phospho-(1D-myo-inositol) + phosphate. The enzyme catalyses 1,2-dioctanoyl-sn-glycero-3-phospho-(1D-myo-inositol-3,5-bisphosphate) + H2O = 1,2-dioctanoyl-sn-glycero-3-phospho-(1D-myo-inositol-5-phosphate) + phosphate. It carries out the reaction 1,2-dihexadecanoyl-sn-glycero-3-phospho-(1D-myo-inositol-3,5-phosphate) + H2O = 1,2-dihexadecanoyl-sn-glycero-3-phospho-(1D-myo-inositol-5-phosphate) + phosphate. Functionally, lipid phosphatase which dephosphorylates phosphatidylinositol 3-monophosphate (PI3P) and phosphatidylinositol 3,5-bisphosphate (PI(3,5)P2). The sequence is that of Myotubularin (mtm1) from Xenopus tropicalis (Western clawed frog).